The chain runs to 812 residues: Phenylalanine--tRNA ligase beta subunit (812 aa).

A tRNA-binding domain is found at 39–155 (SKTFAPFTIA…ADAPVGAGYA (117 aa)). The 76-residue stretch at 405 to 480 (PEDRVIDFPL…RIVGVDKVPM (76 aa)) folds into the B5 domain. Residues D458, D464, E467, and E468 each coordinate Mg(2+). The FDX-ACB domain occupies 718–811 (PAFQPVSRDF…VAKRTGGSLR (94 aa)).

It belongs to the phenylalanyl-tRNA synthetase beta subunit family. Type 1 subfamily. Tetramer of two alpha and two beta subunits. Requires Mg(2+) as cofactor.

It is found in the cytoplasm. The catalysed reaction is tRNA(Phe) + L-phenylalanine + ATP = L-phenylalanyl-tRNA(Phe) + AMP + diphosphate + H(+). The sequence is that of Phenylalanine--tRNA ligase beta subunit from Nitrobacter winogradskyi (strain ATCC 25391 / DSM 10237 / CIP 104748 / NCIMB 11846 / Nb-255).